A 514-amino-acid polypeptide reads, in one-letter code: DNA-(apurinic or apyrimidinic site) endonuclease 2 (514 aa).

2 residues coordinate Mg(2+): Asn8 and Glu48. The active site involves Tyr156. Asp197, Asn199, Asp303, and His304 together coordinate Mg(2+). Asp197 acts as the Proton donor/acceptor in catalysis. His304 serves as the catalytic Proton acceptor. The disordered stretch occupies residues 359–417 (PSNQTQVHMRKNKARVRSTRSRPSKTGSSRGQKNLMSYFQPSSSGPQTSNLDLPSLGTL). The span at 366–381 (HMRKNKARVRSTRSRP) shows a compositional bias: basic residues. A Glycyl lysine isopeptide (Lys-Gly) (interchain with G-Cter in ubiquitin) cross-link involves residue Lys371. The segment covering 382–410 (SKTGSSRGQKNLMSYFQPSSSGPQTSNLD) has biased composition (polar residues). The tract at residues 390–397 (QKNLMSYF) is required for the interaction and colocalization with PCNA in nuclear foci in presence of oxidative-induced DNA damaging agents. Residues Cys465, His468, Cys491, and Cys505 each contribute to the Zn(2+) site. Residues 465 to 514 (CGGHREPCVMRTVKKPGPNLGRHFYMCARPQGPPTDPSSRCNFFLWSRPS) form a GRF-type zinc finger.

It belongs to the DNA repair enzymes AP/ExoA family. In terms of assembly, interacts with PCNA; this interaction is triggered by reactive oxygen species and increased by misincorporation of uracil in nuclear DNA. It depends on Mg(2+) as a cofactor. Mn(2+) is required as a cofactor. Post-translationally, ubiquitinated by the CUL9-RBX1 complex. Ubiquitinated by MKRN3 at Lys-371 leading to proteasomal degradation.

Its subcellular location is the nucleus. The protein localises to the cytoplasm. It is found in the mitochondrion. The enzyme catalyses Exonucleolytic cleavage in the 3'- to 5'-direction to yield nucleoside 5'-phosphates.. 3'-5' exonuclease activity is activated by sodium and manganese. 3'-5' exonuclease and 3'-phosphodiesterase activities are stimulated in presence of PCNA. In terms of biological role, functions as a weak apurinic/apyrimidinic (AP) endodeoxyribonuclease in the DNA base excision repair (BER) pathway of DNA lesions induced by oxidative and alkylating agents. Initiates repair of AP sites in DNA by catalyzing hydrolytic incision of the phosphodiester backbone immediately adjacent to the damage, generating a single-strand break with 5'-deoxyribose phosphate and 3'-hydroxyl ends. Also displays double-stranded DNA 3'-5' exonuclease, 3'-phosphodiesterase activities. Shows robust 3'-5' exonuclease activity on 3'-recessed heteroduplex DNA and is able to remove mismatched nucleotides preferentially. Shows fairly strong 3'-phosphodiesterase activity involved in the removal of 3'-damaged termini formed in DNA by oxidative agents. In the nucleus functions in the PCNA-dependent BER pathway. Plays a role in reversing blocked 3' DNA ends, problematic lesions that preclude DNA synthesis. Required for somatic hypermutation (SHM) and DNA cleavage step of class switch recombination (CSR) of immunoglobulin genes. Required for proper cell cycle progression during proliferation of peripheral lymphocytes. In Bos taurus (Bovine), this protein is DNA-(apurinic or apyrimidinic site) endonuclease 2 (APEX2).